Reading from the N-terminus, the 438-residue chain is Putative truncated GMC-type inactive oxidoreductase L894 (438 aa).

Residues 1 to 26 form the signal peptide; it reads MYVFLLFSRYKIFYVYIKKMAHRSRC. 79–109 is an FAD binding site; the sequence is DIVIIGAGAAGCVLAYYLTKFSDLKIILLEA.

It belongs to the GMC oxidoreductase family. The cofactor is FAD.

The protein localises to the virion. This is Putative truncated GMC-type inactive oxidoreductase L894 from Acanthamoeba polyphaga (Amoeba).